We begin with the raw amino-acid sequence, 434 residues long: Lipoyl synthase, mitochondrial (434 aa).

The transit peptide at 1–31 (MAASARGLRTLQSAHSSTTVPRLQLAVSRCY) directs the protein to the mitochondrion. Residues 34–54 (TTSPDPPITNSSNSSNSTPTP) are compositionally biased toward low complexity. The interval 34 to 55 (TTSPDPPITNSSNSSNSTPTPK) is disordered. Positions 144, 149, 155, 175, 179, 182, and 390 each coordinate [4Fe-4S] cluster. One can recognise a Radical SAM core domain in the interval 158-379 (GSSKSAATAT…KERALEMGFL (222 aa)).

It belongs to the radical SAM superfamily. Lipoyl synthase family. The cofactor is [4Fe-4S] cluster.

It is found in the mitochondrion. The enzyme catalyses [[Fe-S] cluster scaffold protein carrying a second [4Fe-4S](2+) cluster] + N(6)-octanoyl-L-lysyl-[protein] + 2 oxidized [2Fe-2S]-[ferredoxin] + 2 S-adenosyl-L-methionine + 4 H(+) = [[Fe-S] cluster scaffold protein] + N(6)-[(R)-dihydrolipoyl]-L-lysyl-[protein] + 4 Fe(3+) + 2 hydrogen sulfide + 2 5'-deoxyadenosine + 2 L-methionine + 2 reduced [2Fe-2S]-[ferredoxin]. Its pathway is protein modification; protein lipoylation via endogenous pathway; protein N(6)-(lipoyl)lysine from octanoyl-[acyl-carrier-protein]: step 2/2. Catalyzes the radical-mediated insertion of two sulfur atoms into the C-6 and C-8 positions of the octanoyl moiety bound to the lipoyl domains of lipoate-dependent enzymes, thereby converting the octanoylated domains into lipoylated derivatives. The sequence is that of Lipoyl synthase, mitochondrial from Paracoccidioides brasiliensis (strain Pb03).